The chain runs to 143 residues: Large ribosomal subunit protein uL11 (143 aa).

The protein belongs to the universal ribosomal protein uL11 family. Part of the ribosomal stalk of the 50S ribosomal subunit. Interacts with L10 and the large rRNA to form the base of the stalk. L10 forms an elongated spine to which L12 dimers bind in a sequential fashion forming a multimeric L10(L12)X complex. In terms of processing, one or more lysine residues are methylated.

Its function is as follows. Forms part of the ribosomal stalk which helps the ribosome interact with GTP-bound translation factors. The chain is Large ribosomal subunit protein uL11 from Paenarthrobacter aurescens (strain TC1).